The chain runs to 597 residues: Aspartate--tRNA(Asp/Asn) ligase (597 aa).

Residue Glu-175 coordinates L-aspartate. Positions 199–202 are aspartate; that stretch reads QQYK. L-aspartate is bound by residues Arg-221 and His-454. 221–223 provides a ligand contact to ATP; the sequence is RDE. An ATP-binding site is contributed by Glu-488. Arg-495 is an L-aspartate binding site. An ATP-binding site is contributed by 540-543; it reads GIDR.

This sequence belongs to the class-II aminoacyl-tRNA synthetase family. Type 1 subfamily. Homodimer.

It localises to the cytoplasm. It carries out the reaction tRNA(Asx) + L-aspartate + ATP = L-aspartyl-tRNA(Asx) + AMP + diphosphate. In terms of biological role, aspartyl-tRNA synthetase with relaxed tRNA specificity since it is able to aspartylate not only its cognate tRNA(Asp) but also tRNA(Asn). Reaction proceeds in two steps: L-aspartate is first activated by ATP to form Asp-AMP and then transferred to the acceptor end of tRNA(Asp/Asn). The protein is Aspartate--tRNA(Asp/Asn) ligase of Bartonella tribocorum (strain CIP 105476 / IBS 506).